The sequence spans 1047 residues: Probable phospholipid-transporting ATPase IIA (1047 aa).

Thr2 is subject to N-acetylthreonine. Residues Thr2–Leu69 lie on the Cytoplasmic side of the membrane. The chain crosses the membrane as a helical span at residues Pro70–Ser91. The Extracellular portion of the chain corresponds to Gln92 to Glu96. Residues Met97–Arg119 form a helical membrane-spanning segment. The Cytoplasmic portion of the chain corresponds to Glu120 to Leu303. Residues Thr304–Ala325 form a helical membrane-spanning segment. Residues Gly326–Ile332 are Extracellular-facing. Residues Ile333–Gly354 traverse the membrane as a helical segment. Topologically, residues Lys355–Ala841 are cytoplasmic. Residue Asp391 is the 4-aspartylphosphate intermediate of the active site. Positions 391, 392, 393, 502, 544, 549, 568, 597, 677, 678, 679, 759, and 765 each coordinate ATP. Asp391 serves as a coordination point for Mg(2+). A Mg(2+)-binding site is contributed by Thr393. Asp785 contributes to the Mg(2+) binding site. ATP-binding residues include Asn788 and Asp789. Asp789 is a Mg(2+) binding site. A helical transmembrane segment spans residues Leu842–Ser862. At Val863–Gly874 the chain is on the extracellular side. Residues Phe875–Val893 traverse the membrane as a helical segment. Over Leu894–Thr923 the chain is Cytoplasmic. The chain crosses the membrane as a helical span at residues Phe924–Ala942. At Leu943–Glu949 the chain is on the extracellular side. A helical transmembrane segment spans residues Phe950–Thr972. The Cytoplasmic segment spans residues Ile973–Trp978. Residues Leu979–His999 form a helical membrane-spanning segment. The Extracellular portion of the chain corresponds to Glu1000–Phe1006. Residues Ile1007–Leu1030 traverse the membrane as a helical segment. At Lys1031–Ser1047 the chain is on the cytoplasmic side.

It belongs to the cation transport ATPase (P-type) (TC 3.A.3) family. Type IV subfamily. In terms of assembly, heterotrimer with MON2 and DOP1B; this complex regulates SNX3-retromer mediated endosomal sorting of WLS. Interacts with RAB5A and RAB11A. Requires Mg(2+) as cofactor.

The protein resides in the early endosome membrane. Its subcellular location is the recycling endosome membrane. It is found in the late endosome membrane. It localises to the golgi apparatus. The protein localises to the trans-Golgi network membrane. The protein resides in the cell membrane. The enzyme catalyses ATP + H2O + phospholipidSide 1 = ADP + phosphate + phospholipidSide 2.. Its function is as follows. Plays a role in regulating membrane trafficking of cargo proteins, namely endosome to plasma membrane recycling, probably acting through RAB5 and RAB11 activation. Also involved in endosome to trans-Golgi network retrograde transport. In complex with MON2 and DOP1B, regulates SNX3 retromer-mediated endosomal sorting of WLS, a transporter of Wnt morphogens in developing tissues. Participates in the formation of endosomal carriers that direct WLS trafficking back to Golgi, away from lysosomal degradation. Appears to be implicated in intercellular communication by negatively regulating the release of exosomes. The flippase activity towards membrane lipids and its role in membrane asymmetry remains to be proved. Required for the maintenance of neurite morphology and synaptic transmission. In Homo sapiens (Human), this protein is Probable phospholipid-transporting ATPase IIA.